We begin with the raw amino-acid sequence, 644 residues long: Exoribonuclease 2 (644 aa).

Residues 189–516 form the RNB domain; the sequence is REDLTALDFV…NHRLLKAVIK (328 aa). An S1 motif domain is found at 561–643; it reads DTRFAAEIVD…ETRSIIARPV (83 aa).

It belongs to the RNR ribonuclease family. RNase II subfamily.

It localises to the cytoplasm. It carries out the reaction Exonucleolytic cleavage in the 3'- to 5'-direction to yield nucleoside 5'-phosphates.. Functionally, involved in mRNA degradation. Hydrolyzes single-stranded polyribonucleotides processively in the 3' to 5' direction. The sequence is that of Exoribonuclease 2 from Escherichia coli O6:K15:H31 (strain 536 / UPEC).